A 54-amino-acid chain; its full sequence is Ovomucoid (54 aa).

The Kazal-like domain occupies 4–54 (VDCSDYPKPACRMEYMPLCGSDNKTYGNKCNFCNAVVDSNGTLTLSHFGKC). Intrachain disulfides connect cysteine 6–cysteine 36, cysteine 14–cysteine 33, and cysteine 22–cysteine 54. N-linked (GlcNAc...) asparagine glycosylation is present at asparagine 43.

It localises to the secreted. The sequence is that of Ovomucoid from Cereopsis novaehollandiae (Cape Barren goose).